The primary structure comprises 422 residues: MAADKPHMNLAVIGHIDHGKSTFVGRLMYDAGAVPAHIIEKYKEEAKQKGKESFAFAWVMDSLKEERERGITIDIAHKRFDTDKFYFTVVDCPGHRDFVKNMITGASQADAAVLVVAAPDGVMAQTKEHIFLSRTLGINQLIVAINKMDAVDYSEARYKEVVEQVSGILKMIGFKPSEIPFIPTSAFHGDNIMKLSDKTPWYKGPAIMEALNSLKEPEKPSTLPLRIPVEDAYTISGIGTVPVGRVETGVMKKGDKVVFMPGGAGGEVKSIEMHHEEIPQATPGDNIGWNVRGIGKNDVRRGDVCGHADNPPKVADEFVGQIVVLQHPSAITAGYTPVFHAHTSQIACQLIALNKKLDPKTGQVKEENPTFLKAGDAAIVTIKPTKPMVIEPVKEIPQLGRFAIRDMGMTIAAGMCMSVKQK.

The 217-residue stretch at 5-221 (KPHMNLAVIG…NSLKEPEKPS (217 aa)) folds into the tr-type G domain. The tract at residues 14-21 (GHIDHGKS) is G1. 14 to 21 (GHIDHGKS) is a GTP binding site. Position 21 (S21) interacts with Mg(2+). The interval 70–74 (GITID) is G2. Residues 91-94 (DCPG) form a G3 region. GTP-binding positions include 91–95 (DCPGH) and 146–149 (NKMD). Residues 146-149 (NKMD) form a G4 region. Residues 185–187 (SAF) are G5.

It belongs to the TRAFAC class translation factor GTPase superfamily. Classic translation factor GTPase family. EF-Tu/EF-1A subfamily.

It is found in the cytoplasm. It carries out the reaction GTP + H2O = GDP + phosphate + H(+). GTP hydrolase that promotes the GTP-dependent binding of aminoacyl-tRNA to the A-site of ribosomes during protein biosynthesis. The sequence is that of Elongation factor 1-alpha from Methanosarcina mazei (strain ATCC BAA-159 / DSM 3647 / Goe1 / Go1 / JCM 11833 / OCM 88) (Methanosarcina frisia).